Consider the following 139-residue polypeptide: Large-conductance mechanosensitive channel (139 aa).

Helical transmembrane passes span 17–37 (VVDMAVGVIIGGAFGKIVTSL) and 88–108 (TVDFLILAFVIFLMIKAIMAA).

It belongs to the MscL family. In terms of assembly, homopentamer.

It localises to the cell inner membrane. Channel that opens in response to stretch forces in the membrane lipid bilayer. May participate in the regulation of osmotic pressure changes within the cell. In Porphyromonas gingivalis (strain ATCC 33277 / DSM 20709 / CIP 103683 / JCM 12257 / NCTC 11834 / 2561), this protein is Large-conductance mechanosensitive channel.